We begin with the raw amino-acid sequence, 136 residues long: MFKEFKEFALKGNMIDLAIGVIIGGAFGSLVNSIVNDIFMPIIGLITGGIDFSNMFIQLAGEKQATLSAAKAAGATISYGHFITLLINFLIIAWVLFFFVKAMNKMRRKEEGESPNKTSSEEQLLTEIRDLLAKKK.

Helical transmembrane passes span 15–35 (IDLAIGVIIGGAFGSLVNSIV), 38–58 (IFMPIIGLITGGIDFSNMFIQ), and 80–100 (GHFITLLINFLIIAWVLFFFV).

Belongs to the MscL family. Homopentamer.

The protein resides in the cell inner membrane. Channel that opens in response to stretch forces in the membrane lipid bilayer. May participate in the regulation of osmotic pressure changes within the cell. The polypeptide is Large-conductance mechanosensitive channel (Bartonella tribocorum (strain CIP 105476 / IBS 506)).